Consider the following 219-residue polypeptide: Sporamin A (219 aa).

The N-terminal stretch at M1–S23 is a signal peptide.

The protein belongs to the protease inhibitor I3 (leguminous Kunitz-type inhibitor) family. Accumulates specifically in tuberous roots and tubers upon tuberization. Sporamin accounts 60 to 80% of the total soluble protein of the organ.

Its subcellular location is the vacuole. Its function is as follows. Major tuberous root protein. The chain is Sporamin A (GSPO-A1) from Ipomoea batatas (Sweet potato).